Reading from the N-terminus, the 264-residue chain is Protein OXIDATIVE STRESS 3 LIKE 1 (264 aa).

2 disordered regions span residues 1–76 (MDCV…GPLE) and 178–225 (TGEG…QGSF). Residues 29 to 43 (PSDSSSSPSSSASSS) are compositionally biased toward low complexity. Residues 47 to 56 (NSDDGEKSSE) show a composition bias toward basic and acidic residues. Residues 57 to 67 (DGGDDAGENEV) are compositionally biased toward acidic residues. Low complexity predominate over residues 179–201 (GEGSSSGGDSSPGSSPTTSGSPP). Over residues 203–212 (QLHHHQHQMK) the composition is skewed to basic residues.

Its subcellular location is the nucleus. Functionally, promotes slightly the tolerance to zinc (Zn) and to oxidizing chemicals (e.g. diamide). This Arabidopsis thaliana (Mouse-ear cress) protein is Protein OXIDATIVE STRESS 3 LIKE 1.